A 266-amino-acid polypeptide reads, in one-letter code: Cytosolic Fe-S cluster assembly factor Nubp2 homolog (266 aa).

14-21 provides a ligand contact to ATP; it reads GKGGVGKS. [4Fe-4S] cluster-binding residues include C188 and C191.

The protein belongs to the Mrp/NBP35 ATP-binding proteins family. Nubp2/CFD1 subfamily. In terms of assembly, heterotetramer of 2 Nubp1 and 2 Nubp2 chains. The cofactor is [4Fe-4S] cluster.

It localises to the cytoplasm. In terms of biological role, component of the cytosolic iron-sulfur (Fe/S) protein assembly (CIA) machinery. Required for maturation of extramitochondrial Fe-S proteins. The Nubp1-Nubp2 heterotetramer forms a Fe-S scaffold complex, mediating the de novo assembly of an Fe-S cluster and its transfer to target apoproteins. This Drosophila virilis (Fruit fly) protein is Cytosolic Fe-S cluster assembly factor Nubp2 homolog.